Consider the following 235-residue polypeptide: Thiamine import ATP-binding protein ThiQ (235 aa).

The ABC transporter domain occupies 2–230 (LKLIDITWLY…QASASALLGI (229 aa)). ATP is bound at residue 32–39 (GPSGAGKS).

This sequence belongs to the ABC transporter superfamily. Thiamine importer (TC 3.A.1.19.1) family. In terms of assembly, the complex is composed of two ATP-binding proteins (ThiQ), two transmembrane proteins (ThiP) and a solute-binding protein (ThiB).

It is found in the cell inner membrane. The catalysed reaction is thiamine(out) + ATP + H2O = thiamine(in) + ADP + phosphate + H(+). Its function is as follows. Part of the ABC transporter complex ThiBPQ involved in thiamine import. Responsible for energy coupling to the transport system. Is also involved in thiamine pyrophosphate (TPP) transport. This Salmonella typhimurium (strain LT2 / SGSC1412 / ATCC 700720) protein is Thiamine import ATP-binding protein ThiQ.